We begin with the raw amino-acid sequence, 507 residues long: Histidine ammonia-lyase (507 aa).

Residues 141–143 constitute a cross-link (5-imidazolinone (Ala-Gly)); the sequence is ASG. At S142 the chain carries 2,3-didehydroalanine (Ser).

It belongs to the PAL/histidase family. In terms of processing, contains an active site 4-methylidene-imidazol-5-one (MIO), which is formed autocatalytically by cyclization and dehydration of residues Ala-Ser-Gly.

The protein resides in the cytoplasm. The catalysed reaction is L-histidine = trans-urocanate + NH4(+). Its pathway is amino-acid degradation; L-histidine degradation into L-glutamate; N-formimidoyl-L-glutamate from L-histidine: step 1/3. This Natranaerobius thermophilus (strain ATCC BAA-1301 / DSM 18059 / JW/NM-WN-LF) protein is Histidine ammonia-lyase.